Consider the following 227-residue polypeptide: PKHD-type hydroxylase Bxeno_B2194 (227 aa).

The Fe2OG dioxygenase domain occupies 78–178 (KVFPPLFNRY…RVASFFWIQS (101 aa)). Fe cation contacts are provided by histidine 96, aspartate 98, and histidine 159. Arginine 169 contacts 2-oxoglutarate.

Fe(2+) serves as cofactor. Requires L-ascorbate as cofactor.

The sequence is that of PKHD-type hydroxylase Bxeno_B2194 from Paraburkholderia xenovorans (strain LB400).